A 318-amino-acid chain; its full sequence is (1S)-1,7-diacetoxy-luvungin A aldo-keto reductase (318 aa).

Residue Tyr54 is the Proton donor of the active site.

The protein belongs to the aldo/keto reductase family. Expressed in flowers, maturing fruits and in juice vesicles.

The catalysed reaction is (1S)-1,7-diacetoxy-luvungin A + AH2 + H2O = (1R,2R,3S,8R,10R,11R,15S,16S)-3-(acetyloxy)-15-[(4R)-4-[(2S)-3,3-dimethyloxiran-2-yl]-1,4-dihydroxybutan-2-yl]-2,7,7,11,16-pentamethyl-5-oxo-6-oxatetracyclo[9.7.0.0(2,8).0(12,16)]octadec-12-en-10-yl acetate + acetate + A + H(+). It participates in secondary metabolite biosynthesis; terpenoid biosynthesis. Functionally, aldo-keto reductase involved in the biosynthesis of limonoids triterpene natural products such as limonin, a compound with insecticidal activity responsible for the bitter taste in citrus. Can use (1S)-1,7-diacetoxy-luvungin A as substrate. The sequence is that of (1S)-1,7-diacetoxy-luvungin A aldo-keto reductase from Citrus sinensis (Sweet orange).